The chain runs to 589 residues: Protein MICRORCHIDIA 3 (589 aa).

The segment at 1–33 is disordered; that stretch reads MAPESKNAGVSVVVNLDSDSDSDNDDGVGGRGA. A coiled-coil region spans residues 542–589; sequence MRCEEYVKKETELEQTVSNLAKELEETKSKCARLALLVDAKRREMQQV.

It belongs to the MORC ATPase protein family. As to quaternary structure, homodimer and heterodimer. Component of an RNA-directed DNA methylation (RdDM) complex. Requires Mg(2+) as cofactor. It depends on Mn(2+) as a cofactor.

The protein resides in the nucleus. Its function is as follows. Exhibits ATPase activity. Binds DNA/RNA in a non-specific manner and exhibits endonuclease activity. Probably involved in DNA repair. Involved in RNA-directed DNA methylation (RdDM) as a component of the RdDM machinery and required for gene silencing. May also be involved in the regulation of chromatin architecture to maintain gene silencing. This chain is Protein MICRORCHIDIA 3, found in Arabidopsis thaliana (Mouse-ear cress).